Here is a 293-residue protein sequence, read N- to C-terminus: 4-hydroxy-tetrahydrodipicolinate synthase (293 aa).

Position 44 (T44) interacts with pyruvate. Catalysis depends on Y132, which acts as the Proton donor/acceptor. The active-site Schiff-base intermediate with substrate is K161. Residue I203 participates in pyruvate binding.

The protein belongs to the DapA family. In terms of assembly, homotetramer; dimer of dimers.

It localises to the cytoplasm. The enzyme catalyses L-aspartate 4-semialdehyde + pyruvate = (2S,4S)-4-hydroxy-2,3,4,5-tetrahydrodipicolinate + H2O + H(+). It functions in the pathway amino-acid biosynthesis; L-lysine biosynthesis via DAP pathway; (S)-tetrahydrodipicolinate from L-aspartate: step 3/4. Functionally, catalyzes the condensation of (S)-aspartate-beta-semialdehyde [(S)-ASA] and pyruvate to 4-hydroxy-tetrahydrodipicolinate (HTPA). The chain is 4-hydroxy-tetrahydrodipicolinate synthase from Sulfurihydrogenibium sp. (strain YO3AOP1).